The following is a 434-amino-acid chain: ATP-dependent protease ATPase subunit HslU (434 aa).

Residues Val-18, 60-65 (GVGKTE), Asp-247, Glu-312, and Arg-384 contribute to the ATP site.

It belongs to the ClpX chaperone family. HslU subfamily. A double ring-shaped homohexamer of HslV is capped on each side by a ring-shaped HslU homohexamer. The assembly of the HslU/HslV complex is dependent on binding of ATP.

It is found in the cytoplasm. Functionally, ATPase subunit of a proteasome-like degradation complex; this subunit has chaperone activity. The binding of ATP and its subsequent hydrolysis by HslU are essential for unfolding of protein substrates subsequently hydrolyzed by HslV. HslU recognizes the N-terminal part of its protein substrates and unfolds these before they are guided to HslV for hydrolysis. The sequence is that of ATP-dependent protease ATPase subunit HslU from Hyphomonas neptunium (strain ATCC 15444).